Here is a 417-residue protein sequence, read N- to C-terminus: Serine/threonine transporter SstT (417 aa).

8 consecutive transmembrane segments (helical) span residues 21–41, 49–69, 83–103, 142–162, 193–213, 218–238, 291–311, and 331–351; these read ILAGLIAGILLAWLAPEVAKM, FISALKAVAPVLVWVLVMASI, ILVLYLLATFFAALTAVVASF, ALINGNYMGILAWAIGLGLAL, IGIFGLVSSTIATTGFKALAG, LLVLIGCMLFVALVVNPLIVF, IPLGATINMGGAAITITILTL, and LVAAICACGASGVAGGSLLLI.

The protein belongs to the dicarboxylate/amino acid:cation symporter (DAACS) (TC 2.A.23) family.

The protein localises to the cell inner membrane. The catalysed reaction is L-serine(in) + Na(+)(in) = L-serine(out) + Na(+)(out). It catalyses the reaction L-threonine(in) + Na(+)(in) = L-threonine(out) + Na(+)(out). In terms of biological role, involved in the import of serine and threonine into the cell, with the concomitant import of sodium (symport system). The chain is Serine/threonine transporter SstT from Proteus mirabilis (strain HI4320).